The sequence spans 131 residues: Profilin-3 (131 aa).

Belongs to the profilin family. As to quaternary structure, occurs in many kinds of cells as a complex with monomeric actin in a 1:1 ratio.

Its subcellular location is the cytoplasm. It localises to the cytoskeleton. In terms of biological role, binds to actin and affects the structure of the cytoskeleton. At high concentrations, profilin prevents the polymerization of actin, whereas it enhances it at low concentrations. By binding to PIP2, it inhibits the formation of IP3 and DG. This Malus domestica (Apple) protein is Profilin-3.